The chain runs to 209 residues: FMN-dependent NADH:quinone oxidoreductase (209 aa).

Residues S18, 102 to 105 (MYNF), and 146 to 149 (SRGG) contribute to the FMN site.

The protein belongs to the azoreductase type 1 family. Homodimer. The cofactor is FMN.

The catalysed reaction is 2 a quinone + NADH + H(+) = 2 a 1,4-benzosemiquinone + NAD(+). The enzyme catalyses N,N-dimethyl-1,4-phenylenediamine + anthranilate + 2 NAD(+) = 2-(4-dimethylaminophenyl)diazenylbenzoate + 2 NADH + 2 H(+). Its function is as follows. Quinone reductase that provides resistance to thiol-specific stress caused by electrophilic quinones. Also exhibits azoreductase activity. Catalyzes the reductive cleavage of the azo bond in aromatic azo compounds to the corresponding amines. The chain is FMN-dependent NADH:quinone oxidoreductase from Saccharophagus degradans (strain 2-40 / ATCC 43961 / DSM 17024).